The sequence spans 508 residues: Carboxypeptidase Y homolog ARB_05721 (508 aa).

The N-terminal stretch at 1–25 (MELYLNMLSFWYILLATSFFGPSQA) is a signal peptide. Residues N132 and N169 are each glycosylated (N-linked (GlcNAc...) asparagine). Residue S204 is part of the active site. An N-linked (GlcNAc...) asparagine glycan is attached at N268. Intrachain disulfides connect C282-C305, C289-C298, and C332-C338. The active site involves D410. Residue C413 coordinates substrate. N-linked (GlcNAc...) asparagine glycosylation is present at N451. H484 is an active-site residue. M485 contacts substrate.

The protein belongs to the peptidase S10 family.

The protein resides in the secreted. It carries out the reaction Release of a C-terminal amino acid with broad specificity.. In terms of biological role, involved in degradation of small peptides. The polypeptide is Carboxypeptidase Y homolog ARB_05721 (Arthroderma benhamiae (strain ATCC MYA-4681 / CBS 112371) (Trichophyton mentagrophytes)).